The sequence spans 246 residues: Cell division protein ZapD (246 aa).

Belongs to the ZapD family. Interacts with FtsZ.

It localises to the cytoplasm. Functionally, cell division factor that enhances FtsZ-ring assembly. Directly interacts with FtsZ and promotes bundling of FtsZ protofilaments, with a reduction in FtsZ GTPase activity. The protein is Cell division protein ZapD of Vibrio atlanticus (strain LGP32) (Vibrio splendidus (strain Mel32)).